A 144-amino-acid chain; its full sequence is 3-dehydroquinate dehydratase (144 aa).

Tyr-22 acts as the Proton acceptor in catalysis. Asn-73, His-79, and Asp-86 together coordinate substrate. Residue His-99 is the Proton donor of the active site. Substrate is bound by residues 100–101 (IS) and Arg-110.

Belongs to the type-II 3-dehydroquinase family. As to quaternary structure, homododecamer.

It catalyses the reaction 3-dehydroquinate = 3-dehydroshikimate + H2O. It functions in the pathway metabolic intermediate biosynthesis; chorismate biosynthesis; chorismate from D-erythrose 4-phosphate and phosphoenolpyruvate: step 3/7. Catalyzes a trans-dehydration via an enolate intermediate. This Mycobacteroides abscessus (strain ATCC 19977 / DSM 44196 / CCUG 20993 / CIP 104536 / JCM 13569 / NCTC 13031 / TMC 1543 / L948) (Mycobacterium abscessus) protein is 3-dehydroquinate dehydratase.